The chain runs to 444 residues: Protein EMP46 (444 aa).

A signal peptide spans 1-46 (MTTRKTASSLQLLGKITGTKAGTKQKKMNFINGLIWLYMCVWMVHG). Topologically, residues 47 to 408 (KVTQKDELKW…YGKQTKGHDE (362 aa)) are lumenal. An L-type lectin-like domain is found at 52–269 (DELKWNKGYS…EILKMKLYDG (218 aa)). Tyr177 serves as a coordination point for K(+). Cys196 and Cys230 are joined by a disulfide. Residues 409 to 429 (IFSKISVWLALLIFIMITLAY) traverse the membrane as a helical segment. Residues 429 to 432 (YYMF) are mediates the interactions with COPI and COPII coat complexes. At 430–444 (YMFRINQDIKKVKLL) the chain is on the cytoplasmic side. The Di-lysine motif signature appears at 440 to 444 (KVKLL).

The protein belongs to the EMP46/EMP47 family. As to quaternary structure, interacts with EMP47 in the endoplasmic reticulum membrane in order to be transported to the Golgi apparatus. Interacts with the coatomer proteins COP1, SEC21 and SEC23.

The protein localises to the golgi apparatus membrane. It localises to the endoplasmic reticulum membrane. Its function is as follows. Involved in the secretion of glycoproteins and in nucleus architecture and gene silencing. The chain is Protein EMP46 (EMP46) from Saccharomyces cerevisiae (strain ATCC 204508 / S288c) (Baker's yeast).